Reading from the N-terminus, the 387-residue chain is MKFLDEAKIYLKSGDGGGGCISFRREKYIPFGGPDGGDGGRGGDVIFQADGHLNTLIDFRYKQHFKAKRGTHGMGSQCTGASAEALIIKVPVGTIIRDDADGTILVDMVEDGQQFLACKGGDGGRGNMHFKSSTNQAPRRADPGFPGEEMWVRLEMKLLADVGLVGMPNAGKSTLISKVSAAKPKIADYPFTTLQPNLGVVRVEMDHSFVMADIPGLIKGAHEGHGLGMFFLKHIERCAVLLHLVEIDSLEDDDPVSRFQTIEAELAGYSEQLAQKPRILVLSKADLLGEEDRQVVLSWFKERLGEAMPPVFILSSATGEGIEALVYHVGGMVKQWRLKQGKVGHALEDAPTRAGSKALRDEHAPSWQDDDDDDDDDDGVEVIWVRE.

One can recognise an Obg domain in the interval 1–159; that stretch reads MKFLDEAKIY…MWVRLEMKLL (159 aa). In terms of domain architecture, OBG-type G spans 160-334; it reads ADVGLVGMPN…LVYHVGGMVK (175 aa). GTP contacts are provided by residues 166–173, 191–195, 213–216, 283–286, and 315–317; these read GMPNAGKS, FTTLQ, DIPG, SKAD, and SSA. 2 residues coordinate Mg(2+): S173 and T193. Residues 347-379 form a disordered region; the sequence is LEDAPTRAGSKALRDEHAPSWQDDDDDDDDDDG. Acidic residues predominate over residues 368–379; that stretch reads QDDDDDDDDDDG.

Belongs to the TRAFAC class OBG-HflX-like GTPase superfamily. OBG GTPase family. As to quaternary structure, monomer. The cofactor is Mg(2+).

It localises to the cytoplasm. Its function is as follows. An essential GTPase which binds GTP, GDP and possibly (p)ppGpp with moderate affinity, with high nucleotide exchange rates and a fairly low GTP hydrolysis rate. Plays a role in control of the cell cycle, stress response, ribosome biogenesis and in those bacteria that undergo differentiation, in morphogenesis control. In Magnetococcus marinus (strain ATCC BAA-1437 / JCM 17883 / MC-1), this protein is GTPase Obg.